The primary structure comprises 173 residues: 3-hydroxydecanoyl-[acyl-carrier-protein] dehydratase (173 aa).

Histidine 71 is an active-site residue.

The protein belongs to the thioester dehydratase family. FabA subfamily. In terms of assembly, homodimer.

It localises to the cytoplasm. It carries out the reaction a (3R)-hydroxyacyl-[ACP] = a (2E)-enoyl-[ACP] + H2O. The catalysed reaction is (3R)-hydroxydecanoyl-[ACP] = (2E)-decenoyl-[ACP] + H2O. It catalyses the reaction (2E)-decenoyl-[ACP] = (3Z)-decenoyl-[ACP]. Its pathway is lipid metabolism; fatty acid biosynthesis. Necessary for the introduction of cis unsaturation into fatty acids. Catalyzes the dehydration of (3R)-3-hydroxydecanoyl-ACP to E-(2)-decenoyl-ACP and then its isomerization to Z-(3)-decenoyl-ACP. Can catalyze the dehydratase reaction for beta-hydroxyacyl-ACPs with saturated chain lengths up to 16:0, being most active on intermediate chain length. This is 3-hydroxydecanoyl-[acyl-carrier-protein] dehydratase from Baumannia cicadellinicola subsp. Homalodisca coagulata.